Reading from the N-terminus, the 258-residue chain is Homeobox protein VENTX (258 aa).

The segment covering 1 to 32 (MRLSSSPPRGPQQLSSFGSVDWLSQSSCSGPT) has biased composition (polar residues). Disordered regions lie at residues 1-93 (MRLS…RAPR) and 227-248 (SHPP…PRGL). The homeobox DNA-binding region spans 91–150 (APRVRTAFTMEQVRTLEGVFQHHQYLSPLERKRLAREMQLSEVQIKTWFQNRRMKHKRQM).

In terms of tissue distribution, expressed in bone marrow of patients recovering from chemotherapy. Also expressed in an erythroleukemia cell line.

It is found in the nucleus. Its function is as follows. May be involved in ventralization. The polypeptide is Homeobox protein VENTX (VENTX) (Homo sapiens (Human)).